A 114-amino-acid chain; its full sequence is Pro-FMRFamide-related neuropeptide FF (114 aa).

Residues 1–21 (MDSKWAALLLLLLLLLNWGHT) form the signal peptide. Positions 22-69 (EEAGSWGEDQVFAGEDKGPHPPQYAHIPDRIQTPGSLFRVLLQAMDTP) are excised as a propeptide. At phenylalanine 82 the chain carries Phenylalanine amide. The propeptide occupies 85–100 (SAWGSWSKEQLNPQAR). Phenylalanine 111 carries the post-translational modification Phenylalanine amide.

This sequence belongs to the FARP (FMRFamide related peptide) family.

The protein localises to the secreted. In terms of biological role, morphine modulating peptides. Have wide-ranging physiologic effects, including the modulation of morphine-induced analgesia, elevation of arterial blood pressure, and increased somatostatin secretion from the pancreas. Neuropeptide FF potentiates and sensitizes ASIC1 and ASIC3 channels. In Mus musculus (Mouse), this protein is Pro-FMRFamide-related neuropeptide FF (Npff).